The primary structure comprises 359 residues: MVDVANIHLPVLLDDCVNLMAPALEHENAIAVDCTLGLAGHSIAFLKAAPQARLIGIDRDSEALGLATERMEREGLADRFIPVHAAFDQLDQVLADQDIERVDAVFMDLGLSSLQIDETDRGFSYSHDAPLDMRMDVSQPLTAERILATYDAAELVRIFKEYGEERFSRQIARAIVARRDKEPFTTTAQLNRLVDEVVPQAHRPAGNPAKRVFQALRIEVNGELDKLASTLPQAANRLHVGGRLVVESYHSLEDKTVKSFMAQGLRVDVPAGLPVIPPDAQPFFTDLTRGAIKADEHEIAANPRSASVRLRAVEVSREIPSRWRKRFTQTAQGLNDVKIQGSASPGRAKNTARIRTRRG.

Residues 39 to 41, aspartate 58, phenylalanine 87, aspartate 108, and glutamine 115 contribute to the S-adenosyl-L-methionine site; that span reads AGH. Residues 339–359 are disordered; it reads IQGSASPGRAKNTARIRTRRG. The segment covering 350 to 359 has biased composition (basic residues); that stretch reads NTARIRTRRG.

The protein belongs to the methyltransferase superfamily. RsmH family.

It localises to the cytoplasm. It catalyses the reaction cytidine(1402) in 16S rRNA + S-adenosyl-L-methionine = N(4)-methylcytidine(1402) in 16S rRNA + S-adenosyl-L-homocysteine + H(+). In terms of biological role, specifically methylates the N4 position of cytidine in position 1402 (C1402) of 16S rRNA. The polypeptide is Ribosomal RNA small subunit methyltransferase H (Bifidobacterium longum (strain DJO10A)).